The chain runs to 209 residues: Cyclin-dependent kinase inhibitor 2 (209 aa).

The interval methionine 1–aspartate 32 is required for nuclear localization.

It belongs to the CDI family. ICK/KRP subfamily. Specifically interacts with CDKA-1, but not with CDKB1-1. Post-translationally, phosphorylated.

It localises to the nucleus. The protein localises to the nucleoplasm. Binds and inhibits CYCD2-1/CDKA-1 complex kinase activity. Regulates cell division which is crucial for plant growth, development and morphogenesis. May regulate early lateral root initiation by blocking the G1/S phase transition. Controls the mitosis-to-endocycle transition and the onset of the endoreduplication cycle during leaf development through inhibition of mitotic CDKA-1 kinase complexes. Specifically targets CDKA-1. The chain is Cyclin-dependent kinase inhibitor 2 (KRP2) from Arabidopsis thaliana (Mouse-ear cress).